Reading from the N-terminus, the 127-residue chain is Cold-regulated protein 1 (127 aa).

Positions 39 to 127 are disordered; sequence ARGPPPSPAP…WTRPRMARAR (89 aa). The segment covering 85 to 101 has biased composition (basic residues); sequence SRRRRRRRATRRARSRM. Low complexity predominate over residues 102–121; that stretch reads PRTTPWRAPRAPARAWWTRP.

The sequence is that of Cold-regulated protein 1 from Hordeum vulgare (Barley).